Reading from the N-terminus, the 855-residue chain is DNA mismatch repair protein MutS (855 aa).

616–623 lines the ATP pocket; it reads GPNMGGKS.

It belongs to the DNA mismatch repair MutS family.

This protein is involved in the repair of mismatches in DNA. It is possible that it carries out the mismatch recognition step. This protein has a weak ATPase activity. The chain is DNA mismatch repair protein MutS from Salmonella gallinarum (strain 287/91 / NCTC 13346).